Consider the following 716-residue polypeptide: MTVQLTDEAYAVLEGRHADPFHYLGPHSEDNRVVVRALLPDATAVEAVGEHGETAHLERVHESGLFAGSLPNGSHRYQLRARFGDTTVDLEDPYRFPPILTDFDLYLLGEGTDQRLYDKLGAHPMALEGVNGVAFVVLAPNARRVSVVGDFNFWNPRRHQMRVRGNGYWELFVPGAAAGDHYKFDVVGPHGEQLPQKSDPMAFAAELRPKTASIVVDQTRLPQPRPAPAQINALGAPMSIYEVHLGSWRRKDGEQWLSYRELAETLPAYVREMGFTHVEFLPVSEHPFDGSWGYQPTGLYAPTSRFGTPEDFCALIDAFHAQGIGVLLDWVPGHFPDDPHGLGHFDGTALYEHANPLQGRHLDWGTLIYNYGRTEVVNFLVSNALFWLERYGIDGLRVDAVASMLYLDYSRPADGWVPNKFGGRENIEAIDFLRRFNAEVFAKFPHVTTAAEESTAWPQVSRPVEFGGLGFGYKWNMGWMHDTLNYISKDPIHRKFHHGQILFGLHYAFSENFILPLSHDEVVHGKRSILGRMPGDEWQRFANLRAYYAFMFAHPGKKLMFMGSEFGQEREWNHDRSLDWHLLDTPKYAGIQALVRDLNRLYRTLPALHQLDCDPFGFEWLVTDDADRNVFAWMRKGDDPRARCLVIANFSPNVYEDYRVRVPFPGRWREALNSDSAVYGGSNVGNAGEVHTLDGLVPELSLTIPPLAAIFLTPED.

Catalysis depends on D399, which acts as the Nucleophile. E452 acts as the Proton donor in catalysis.

Belongs to the glycosyl hydrolase 13 family. GlgB subfamily. In terms of assembly, monomer.

It carries out the reaction Transfers a segment of a (1-&gt;4)-alpha-D-glucan chain to a primary hydroxy group in a similar glucan chain.. Its pathway is glycan biosynthesis; glycogen biosynthesis. Catalyzes the formation of the alpha-1,6-glucosidic linkages in glycogen by scission of a 1,4-alpha-linked oligosaccharide from growing alpha-1,4-glucan chains and the subsequent attachment of the oligosaccharide to the alpha-1,6 position. The chain is 1,4-alpha-glucan branching enzyme GlgB from Rhodopseudomonas palustris (strain BisB5).